A 41-amino-acid polypeptide reads, in one-letter code: Photosystem II reaction center protein L (41 aa).

A helical membrane pass occupies residues 20–40 (LFLGLLLVFVLGILSPATSLT).

Belongs to the PsbL family. In terms of assembly, PSII is composed of 1 copy each of membrane proteins PsbA, PsbB, PsbC, PsbD, PsbE, PsbF, PsbH, PsbI, PsbJ, PsbK, PsbL, PsbM, PsbT, PsbX, PsbY, PsbZ, Psb30/Ycf12, peripheral proteins PsbO, CyanoQ (PsbQ), PsbU, PsbV and a large number of cofactors. It forms dimeric complexes.

It localises to the cellular thylakoid membrane. Its function is as follows. One of the components of the core complex of photosystem II (PSII). PSII is a light-driven water:plastoquinone oxidoreductase that uses light energy to abstract electrons from H(2)O, generating O(2) and a proton gradient subsequently used for ATP formation. It consists of a core antenna complex that captures photons, and an electron transfer chain that converts photonic excitation into a charge separation. This subunit is found at the monomer-monomer interface and is required for correct PSII assembly and/or dimerization. This Synechococcus sp. (strain ATCC 27144 / PCC 6301 / SAUG 1402/1) (Anacystis nidulans) protein is Photosystem II reaction center protein L.